The chain runs to 255 residues: Putative expansin-A27 (255 aa).

The signal sequence occupies residues 1–24 (MGAMAENLLVLCTILAARMALAAA). Residues 45–160 (GGACGYGNLY…RRVRCWRRGG (116 aa)) form the Expansin-like EG45 domain. The Expansin-like CBD domain occupies 170-249 (HFELVLVANV…GWKFGQTFST (80 aa)).

Belongs to the expansin family. Expansin A subfamily.

It localises to the secreted. Its subcellular location is the cell wall. The protein localises to the membrane. Its function is as follows. May cause loosening and extension of plant cell walls by disrupting non-covalent bonding between cellulose microfibrils and matrix glucans. No enzymatic activity has been found. May be required for rapid internodal elongation in deepwater rice during submergence. This is Putative expansin-A27 (EXPA27) from Oryza sativa subsp. japonica (Rice).